A 106-amino-acid polypeptide reads, in one-letter code: MNDSEFHRLADTLWLAIEERLDDWDGDSDIDCEINGGVLTISFENGSKIIINRQEPLHQVWLATKQGGYHFDLKGDEWVCDRSGETFWDLLEQAATQQAGEKVSFR.

The protein belongs to the frataxin family.

Involved in iron-sulfur (Fe-S) cluster assembly. May act as a regulator of Fe-S biogenesis. The protein is Iron-sulfur cluster assembly protein CyaY of Salmonella agona (strain SL483).